A 243-amino-acid polypeptide reads, in one-letter code: Aspartate/glutamate leucyltransferase (243 aa).

The protein belongs to the R-transferase family. Bpt subfamily.

The protein localises to the cytoplasm. The enzyme catalyses N-terminal L-glutamyl-[protein] + L-leucyl-tRNA(Leu) = N-terminal L-leucyl-L-glutamyl-[protein] + tRNA(Leu) + H(+). It carries out the reaction N-terminal L-aspartyl-[protein] + L-leucyl-tRNA(Leu) = N-terminal L-leucyl-L-aspartyl-[protein] + tRNA(Leu) + H(+). Functions in the N-end rule pathway of protein degradation where it conjugates Leu from its aminoacyl-tRNA to the N-termini of proteins containing an N-terminal aspartate or glutamate. The protein is Aspartate/glutamate leucyltransferase of Teredinibacter turnerae (strain ATCC 39867 / T7901).